The sequence spans 1587 residues: Mediator of RNA polymerase II transcription subunit 23 (1587 aa).

Disordered regions lie at residues 1374 to 1484 and 1567 to 1587; these read SQSE…QLQH and QHQQ…QQPH. Over residues 1385–1404 the composition is skewed to basic and acidic residues; that stretch reads PPEKEKSPEKEKEQEQEQHV. Residues 1387-1404 are acidic; it reads EKEKSPEKEKEQEQEQHV. The segment covering 1410-1426 has biased composition (polar residues); sequence LESTPSVSSLPQMQHHL. Low complexity predominate over residues 1430 to 1450; that stretch reads PLLPSHQMMPPPQQHSSSLQH. The segment covering 1463–1484 has biased composition (polar residues); the sequence is DTSQHQTIQQQSNHPTQQQLQH. The segment covering 1567-1576 has biased composition (low complexity); that stretch reads QHQQYMQQQQ. The span at 1577–1587 shows a compositional bias: basic residues; the sequence is QHHHQHQQQPH.

The protein belongs to the Mediator complex subunit 23 family. In terms of assembly, component of the Mediator complex. Interacts with let-19/mdt-13.

It localises to the nucleus. Its function is as follows. Component of the Mediator complex, a coactivator involved in regulated gene transcription of nearly all RNA polymerase II-dependent genes. Mediator functions as a bridge to convey information from gene-specific regulatory proteins to the basal RNA polymerase II transcription machinery. Mediator is recruited to promoters by direct interactions with regulatory proteins and serves as a scaffold for the assembly of a functional pre-initiation complex with RNA polymerase II and the general transcription factors. Functions downstream of receptor let-23 and let-60/Ras during vulval induction likely by down-regulating the expression of phosphatase dep-1 and lin-12/Notch in vulva precursor cell descendants with a primary cell fate. Acts to repress beta-catenin target genes. Required for asymmetric division of T-cells. Plays a role in responses to M.nematophilum-mediated bacterial infection by promoting tail swelling and preventing constipation. In Caenorhabditis elegans, this protein is Mediator of RNA polymerase II transcription subunit 23 (sur-2).